The following is a 444-amino-acid chain: Sprouty-related, EVH1 domain-containing protein 1 (444 aa).

Serine 2 carries the N-acetylserine modification. Residues 6 to 123 (ATSDNDNSYA…RGIRRAIEDI (118 aa)) enclose the WH1 domain. An N6-methyllysine modification is found at lysine 225. The 53-residue stretch at 234–286 (SIRHVSFQDEDEIVRINPRDILIRRYADYRHPDMWKNDLERDDTDSSVPFSKQ) folds into the KBD domain. Serine 239 is modified (phosphoserine). Positions 268–287 (WKNDLERDDTDSSVPFSKQD) are disordered. Serine 309 carries the phosphoserine modification. The required for interaction with TESK1 stretch occupies residues 333 to 444 (SRCVYCQERF…CCGGKHKAAG (112 aa)). The region spanning 334-442 (RCVYCQERFN…CGCCGGKHKA (109 aa)) is the SPR domain.

In terms of assembly, homodimer and heterodimer. Able to interact with SPRED2 to form heterodimers. Interacts (via C-terminus) with TAOK1/MARKK (via C-terminus); the interaction does not affect TAOK1 kinase activity. Interacts (via C-terminus) with TESK1 (via C-terminus); the interaction inhibits TESK1 kinase activity. Interacts with CAV1. Interacts with RAS. Interacts with palmitoyltransferase ZDHHC17/HIP14; the interaction leads to palmitoylation of SPRED1. Palmitoylated by ZDHHC17/HIP14. Post-translationally, ubiquitinated. In terms of processing, phosphorylated on tyrosine. As to expression, expressed in brain. Weakly expressed in lung, heart, liver, kidney, intestine, spleen, testis, thymus, colon and ovary. Also expressed in embryonic tissues such as heart, lung, liver and brain. Highly expressed in IL3-dependent hematopoietic cell lines (Ba/F3 and MC/9) and bone marrow-derived mast cells (BMMC).

The protein localises to the cell membrane. The protein resides in the membrane. It localises to the caveola. It is found in the nucleus. Its function is as follows. Tyrosine kinase substrate that inhibits growth-factor-mediated activation of MAP kinase. Negatively regulates hematopoiesis of bone marrow. Inhibits fibroblast growth factor (FGF)-induced retinal lens fiber differentiation, probably by inhibiting FGF-mediated phosphorylation of ERK1/2. Attenuates actin stress fiber formation via inhibition of TESK1-mediated phosphorylation of cofilin. Inhibits TGFB-induced epithelial-to-mesenchymal transition in lens epithelial cells. The chain is Sprouty-related, EVH1 domain-containing protein 1 (Spred1) from Mus musculus (Mouse).